Here is a 173-residue protein sequence, read N- to C-terminus: Lipoprotein signal peptidase (173 aa).

A run of 3 helical transmembrane segments spans residues 9–29 (LPFL…ILVV), 37–57 (VIPV…GAAF), and 70–90 (ILLV…YLKS). Active-site residues include Asp-124 and Asp-146. A helical transmembrane segment spans residues 142-162 (FNAADSFIVCCGIGLGVNLIL).

Belongs to the peptidase A8 family.

It localises to the cell inner membrane. It carries out the reaction Release of signal peptides from bacterial membrane prolipoproteins. Hydrolyzes -Xaa-Yaa-Zaa-|-(S,diacylglyceryl)Cys-, in which Xaa is hydrophobic (preferably Leu), and Yaa (Ala or Ser) and Zaa (Gly or Ala) have small, neutral side chains.. Its pathway is protein modification; lipoprotein biosynthesis (signal peptide cleavage). Functionally, this protein specifically catalyzes the removal of signal peptides from prolipoproteins. The sequence is that of Lipoprotein signal peptidase from Treponema denticola (strain ATCC 35405 / DSM 14222 / CIP 103919 / JCM 8153 / KCTC 15104).